The chain runs to 557 residues: Urocanate hydratase (557 aa).

NAD(+)-binding positions include G52 to G53, Q130, G176 to G178, E196, R201, N242 to A243, Q263 to H267, Y273 to L274, and Y322. The active site involves C410. G492 is a binding site for NAD(+).

This sequence belongs to the urocanase family. NAD(+) serves as cofactor.

The protein localises to the cytoplasm. It catalyses the reaction 4-imidazolone-5-propanoate = trans-urocanate + H2O. The protein operates within amino-acid degradation; L-histidine degradation into L-glutamate; N-formimidoyl-L-glutamate from L-histidine: step 2/3. Its function is as follows. Catalyzes the conversion of urocanate to 4-imidazolone-5-propionate. The polypeptide is Urocanate hydratase (Allorhizobium ampelinum (strain ATCC BAA-846 / DSM 112012 / S4) (Agrobacterium vitis (strain S4))).